A 117-amino-acid chain; its full sequence is MARVKRGVIARARHKKVLKAAKGYYGARSRVYRVAFQAVVKAAQYAYRDRRQRKRQFRQLWIARINAAARQNGLSYSKFINGLKKASVEIDRKILADIAVFDKVAFAALVAKAKSAL.

It belongs to the bacterial ribosomal protein bL20 family.

Binds directly to 23S ribosomal RNA and is necessary for the in vitro assembly process of the 50S ribosomal subunit. It is not involved in the protein synthesizing functions of that subunit. This is Large ribosomal subunit protein bL20 from Glaesserella parasuis serovar 5 (strain SH0165) (Haemophilus parasuis).